We begin with the raw amino-acid sequence, 144 residues long: 3-hydroxyacyl-[acyl-carrier-protein] dehydratase FabZ (144 aa).

H49 is a catalytic residue.

The protein belongs to the thioester dehydratase family. FabZ subfamily.

Its subcellular location is the cytoplasm. The enzyme catalyses a (3R)-hydroxyacyl-[ACP] = a (2E)-enoyl-[ACP] + H2O. Functionally, involved in unsaturated fatty acids biosynthesis. Catalyzes the dehydration of short chain beta-hydroxyacyl-ACPs and long chain saturated and unsaturated beta-hydroxyacyl-ACPs. The sequence is that of 3-hydroxyacyl-[acyl-carrier-protein] dehydratase FabZ from Alkaliphilus oremlandii (strain OhILAs) (Clostridium oremlandii (strain OhILAs)).